A 392-amino-acid chain; its full sequence is DNA replication protein (392 aa).

A disordered region spans residues 322–341 (NGGNKKISEGTSRAQRKAPH).

In terms of biological role, may play a role in viral DNA replication. Found associated with a viral DNA origin of replication and with host membranes, may attach this origin to the bacterial envelope to initiate replication. This is DNA replication protein (69) from Enterobacteria phage T4 (Bacteriophage T4).